The sequence spans 214 residues: Fruiting body protein SC14 (214 aa).

Residues 1 to 18 (MKLNIAILLAALAATASA) form the signal peptide. 2 N-linked (GlcNAc...) asparagine glycosylation sites follow: Asn-61 and Asn-144. The region spanning 72-195 (LTAHNDERAQ…KSLWYYVCNY (124 aa)) is the SCP domain.

The protein belongs to the CRISP family.

The protein resides in the secreted. The chain is Fruiting body protein SC14 (SC14) from Schizophyllum commune (Split gill fungus).